The primary structure comprises 340 residues: Integral membrane protein SED5 (340 aa).

Over 1 to 319 (MNIKDRTSEF…KYFDRIKSNR (319 aa)) the chain is Cytoplasmic. A disordered region spans residues 31 to 51 (RLQEKESENFANNTTGNGKSV). Polar residues predominate over residues 39-51 (NFANNTTGNGKSV). Positions 146–173 (LNTQMKNISGSFKDVLEERQRLEMANKD) form a coiled coil. Positions 180–231 (TDTGHAPADDQTQSNHAADLTTYNNSNPFMTSLLDESSEKNNNSSNQGELSF) are disordered. The span at 189-209 (DQTQSNHAADLTTYNNSNPFM) shows a compositional bias: polar residues. A t-SNARE coiled-coil homology domain is found at 249–311 (NVYLQERNRA…SGAQRELLKY (63 aa)). Residues 320 to 340 (WLAAKVFFIIFVFFVIWVLVN) traverse the membrane as a helical; Anchor for type IV membrane protein segment.

It belongs to the syntaxin family. In terms of assembly, interacts with SLY1, STF1, SFB3 and GOS1.

Its subcellular location is the membrane. The protein resides in the golgi apparatus membrane. Its function is as follows. Required for vesicular transport between the endoplasmic reticulum and the Golgi complex. Acts as a target organelle soluble NSF attachment protein receptor (t-SNARE). This is Integral membrane protein SED5 (SED5) from Saccharomyces cerevisiae (strain ATCC 204508 / S288c) (Baker's yeast).